We begin with the raw amino-acid sequence, 355 residues long: 3-dehydroquinate synthase (355 aa).

NAD(+) is bound by residues 105–109, 129–130, Lys142, Lys151, and 169–172; these read GVVGD, TS, and TLKT. Residues Glu184, His246, and His263 each coordinate Zn(2+).

Belongs to the sugar phosphate cyclases superfamily. Dehydroquinate synthase family. The cofactor is NAD(+). Co(2+) serves as cofactor. It depends on Zn(2+) as a cofactor.

It is found in the cytoplasm. The enzyme catalyses 7-phospho-2-dehydro-3-deoxy-D-arabino-heptonate = 3-dehydroquinate + phosphate. The protein operates within metabolic intermediate biosynthesis; chorismate biosynthesis; chorismate from D-erythrose 4-phosphate and phosphoenolpyruvate: step 2/7. In terms of biological role, catalyzes the conversion of 3-deoxy-D-arabino-heptulosonate 7-phosphate (DAHP) to dehydroquinate (DHQ). This Streptococcus agalactiae serotype V (strain ATCC BAA-611 / 2603 V/R) protein is 3-dehydroquinate synthase.